A 220-amino-acid chain; its full sequence is uncharacterized protein (220 aa).

The next 7 membrane-spanning stretches (helical) occupy residues Tyr25–Leu45, Pro50–Ser70, Leu74–Leu94, Ile105–Leu125, Ser135–Phe155, Pro158–Tyr178, and Val196–Leu216.

It belongs to the BI1 family.

It localises to the cell membrane. This is an uncharacterized protein from Pasteurella multocida (strain Pm70).